The chain runs to 226 residues: 7-cyano-7-deazaguanine synthase (226 aa).

7 to 17 serves as a coordination point for ATP; the sequence is ISGGMDSLVVA. 4 residues coordinate Zn(2+): Cys187, Cys195, Cys198, and Cys201.

Belongs to the QueC family. The cofactor is Zn(2+).

It catalyses the reaction 7-carboxy-7-deazaguanine + NH4(+) + ATP = 7-cyano-7-deazaguanine + ADP + phosphate + H2O + H(+). The protein operates within purine metabolism; 7-cyano-7-deazaguanine biosynthesis. Functionally, catalyzes the ATP-dependent conversion of 7-carboxy-7-deazaguanine (CDG) to 7-cyano-7-deazaguanine (preQ(0)). The polypeptide is 7-cyano-7-deazaguanine synthase (Chlorobium phaeobacteroides (strain BS1)).